Here is a 557-residue protein sequence, read N- to C-terminus: 2-succinyl-5-enolpyruvyl-6-hydroxy-3-cyclohexene-1-carboxylate synthase (557 aa).

Belongs to the TPP enzyme family. MenD subfamily. As to quaternary structure, homodimer. Mg(2+) serves as cofactor. It depends on Mn(2+) as a cofactor. Requires thiamine diphosphate as cofactor.

The catalysed reaction is isochorismate + 2-oxoglutarate + H(+) = 5-enolpyruvoyl-6-hydroxy-2-succinyl-cyclohex-3-ene-1-carboxylate + CO2. The protein operates within quinol/quinone metabolism; 1,4-dihydroxy-2-naphthoate biosynthesis; 1,4-dihydroxy-2-naphthoate from chorismate: step 2/7. It participates in quinol/quinone metabolism; menaquinone biosynthesis. In terms of biological role, catalyzes the thiamine diphosphate-dependent decarboxylation of 2-oxoglutarate and the subsequent addition of the resulting succinic semialdehyde-thiamine pyrophosphate anion to isochorismate to yield 2-succinyl-5-enolpyruvyl-6-hydroxy-3-cyclohexene-1-carboxylate (SEPHCHC). The protein is 2-succinyl-5-enolpyruvyl-6-hydroxy-3-cyclohexene-1-carboxylate synthase of Yersinia enterocolitica serotype O:8 / biotype 1B (strain NCTC 13174 / 8081).